The primary structure comprises 542 residues: Phosphoacetylglucosamine mutase 2 (542 aa).

The active-site Phosphoserine intermediate is serine 77. Serine 77 serves as a coordination point for Mg(2+). Residues serine 77 and serine 82 each carry the phosphoserine modification. The Mg(2+) site is built by aspartate 292, aspartate 294, and aspartate 296. Residues 385–387, 510–514, and arginine 519 contribute to the substrate site; these read EAN and RSSGT.

The protein belongs to the phosphohexose mutase family. Mg(2+) is required as a cofactor.

It localises to the cytoplasm. The protein resides in the nucleus. It carries out the reaction N-acetyl-alpha-D-glucosamine 1-phosphate = N-acetyl-D-glucosamine 6-phosphate. It participates in nucleotide-sugar biosynthesis; UDP-N-acetyl-alpha-D-glucosamine biosynthesis; N-acetyl-alpha-D-glucosamine 1-phosphate from alpha-D-glucosamine 6-phosphate (route I): step 2/2. Catalyzes the conversion of GlcNAc-6-P into GlcNAc-1-P during the synthesis of uridine diphosphate/UDP-GlcNAc, which is a biosynthetic precursor of chitin and also supplies the amino sugars for N-linked oligosaccharides of glycoproteins. This Schizosaccharomyces pombe (strain 972 / ATCC 24843) (Fission yeast) protein is Phosphoacetylglucosamine mutase 2.